A 338-amino-acid chain; its full sequence is D-erythrose-4-phosphate dehydrogenase (338 aa).

NAD(+) is bound at residue 12-13 (RI). Residues 154 to 156 (SCT), Arg-200, 213 to 214 (TK), and Arg-236 contribute to the substrate site. The Nucleophile role is filled by Cys-155. Residue Asn-318 coordinates NAD(+).

The protein belongs to the glyceraldehyde-3-phosphate dehydrogenase family. Epd subfamily. As to quaternary structure, homotetramer.

It localises to the cytoplasm. It catalyses the reaction D-erythrose 4-phosphate + NAD(+) + H2O = 4-phospho-D-erythronate + NADH + 2 H(+). It participates in cofactor biosynthesis; pyridoxine 5'-phosphate biosynthesis; pyridoxine 5'-phosphate from D-erythrose 4-phosphate: step 1/5. Its function is as follows. Catalyzes the NAD-dependent conversion of D-erythrose 4-phosphate to 4-phosphoerythronate. This chain is D-erythrose-4-phosphate dehydrogenase, found in Tolumonas auensis (strain DSM 9187 / NBRC 110442 / TA 4).